We begin with the raw amino-acid sequence, 292 residues long: 11-beta-hydroxysteroid dehydrogenase 1 (292 aa).

Topologically, residues H2 to Y7 are cytoplasmic. The chain crosses the membrane as a helical; Signal-anchor for type II membrane protein span at residues L8–K24. Topologically, residues E25–S292 are lumenal. NADP(+) is bound by residues G41–S67, T92–M93, and N119–I121. Residue N162 is glycosylated (N-linked (GlcNAc...) asparagine). Substrate is bound at residue S170. The active-site Proton acceptor is Y183. Y183–K187 contacts NADP(+). N207 carries N-linked (GlcNAc...) asparagine glycosylation. Position 218–222 (I218–T222) interacts with NADP(+).

Belongs to the short-chain dehydrogenases/reductases (SDR) family. As to quaternary structure, homodimer. As to expression, detected in adrenal gland, liver, kidney, testis, and at lower levels in brain and lung (at protein level).

The protein resides in the endoplasmic reticulum membrane. The catalysed reaction is an 11beta-hydroxysteroid + NADP(+) = an 11-oxosteroid + NADPH + H(+). It carries out the reaction corticosterone + NADP(+) = 11-dehydrocorticosterone + NADPH + H(+). The enzyme catalyses a 7beta-hydroxysteroid + NADP(+) = a 7-oxosteroid + NADPH + H(+). It catalyses the reaction 7-oxocholesterol + NADPH + H(+) = 7beta-hydroxycholesterol + NADP(+). The catalysed reaction is 7-oxocholesterol + NADPH + H(+) = 7alpha-hydroxycholesterol + NADP(+). It carries out the reaction chenodeoxycholate + NADP(+) = 7-oxolithocholate + NADPH + H(+). The enzyme catalyses 7-oxolithocholate + NADPH + H(+) = ursodeoxycholate + NADP(+). It catalyses the reaction glycochenodeoxycholate + NADP(+) = 7-oxoglycolithocholate + NADPH + H(+). The catalysed reaction is taurochenodeoxycholate + NADP(+) = 7-oxotaurolithocholate + NADPH + H(+). It carries out the reaction tauroursodeoxycholate + NADP(+) = 7-oxotaurolithocholate + NADPH + H(+). The enzyme catalyses glycoursodeoxycholate + NADP(+) = 7-oxoglycolithocholate + NADPH + H(+). It catalyses the reaction 7-oxopregnenolone + NADPH + H(+) = 7beta-hydroxypregnenolone + NADP(+). The catalysed reaction is 3beta,7alpha-dihydroxyandrost-5-en-17-one + NADP(+) = 3beta-hydroxy-5-androstene-7,17-dione + NADPH + H(+). It carries out the reaction 3beta-hydroxy-5-androstene-7,17-dione + NADPH + H(+) = 3beta,7beta-dihydroxyandrost-5-en-17-one + NADP(+). The enzyme catalyses 3beta-hydroxy-5alpha-androstane-7,17-dione + NADPH + H(+) = 3beta,7beta-dihydroxy-5alpha-androstan-17-one + NADP(+). It functions in the pathway steroid metabolism. Controls the reversible conversion of biologically active glucocorticoids such as 11-dehydrocorticosterone to corticosterone in the presence of NADP(H). Participates in the corticosteroid receptor-mediated anti-inflammatory response, as well as metabolic and homeostatic processes. Bidirectional in vitro, predominantly functions as a reductase in vivo, thereby increasing the concentration of active glucocorticoids. It has broad substrate specificity, besides glucocorticoids, it accepts other steroid and sterol substrates. Interconverts 7-oxo- and 7-hydroxy-neurosteroids such as 7-oxopregnenolone and 7beta-hydroxypregnenolone, 7-oxodehydroepiandrosterone (3beta-hydroxy-5-androstene-7,17-dione) and 7beta-hydroxydehydroepiandrosterone (3beta,7beta-dihydroxyandrost-5-en-17-one), among others. Catalyzes reversibly the conversion of the major dietary oxysterol, 7-ketocholesterol (7-oxocholesterol), into the more polar 7-beta-hydroxycholesterol and 7-alpha-hhydroxycholesterol metabolites. 7-oxocholesterol is one of the most important oxysterols, it participates in several events such as induction of apoptosis, accumulation in atherosclerotic lesions, lipid peroxidation, and induction of foam cell formation. Mediates the 7-oxo reduction of 7-oxolithocholate mainly to chenodeoxycholate, and to a lesser extent to ursodeoxycholate, both in its free form and when conjugated to glycine or taurine, providing a link between glucocorticoid activation and bile acid metabolism. Catalyzes the synthesis of 7-beta-25-dihydroxycholesterol from 7-oxo-25-hydroxycholesterol in vitro, which acts as a ligand for the G-protein-coupled receptor (GPCR) Epstein-Barr virus-induced gene 2 (EBI2) and may thereby regulate immune cell migration. This Mesocricetus auratus (Golden hamster) protein is 11-beta-hydroxysteroid dehydrogenase 1 (HSD11B1).